The following is a 485-amino-acid chain: Glutamate--tRNA ligase (485 aa).

The 'HIGH' region motif lies at Pro-11–Asn-21. Residues Lys-255–Arg-259 carry the 'KMSKS' region motif. Lys-258 is a binding site for ATP.

The protein belongs to the class-I aminoacyl-tRNA synthetase family. Glutamate--tRNA ligase type 1 subfamily. As to quaternary structure, monomer.

Its subcellular location is the cytoplasm. The catalysed reaction is tRNA(Glu) + L-glutamate + ATP = L-glutamyl-tRNA(Glu) + AMP + diphosphate. Catalyzes the attachment of glutamate to tRNA(Glu) in a two-step reaction: glutamate is first activated by ATP to form Glu-AMP and then transferred to the acceptor end of tRNA(Glu). This is Glutamate--tRNA ligase from Streptococcus sanguinis (strain SK36).